The sequence spans 437 residues: Vitellogenin-1 (437 aa).

An N-terminal signal peptide occupies residues 1–19; sequence MNPLKIFCFLALVIAVASA. 2 disordered regions span residues 161–194 and 405–437; these read QQQP…ESWK and PKSP…QNQE. Polar residues-rich tracts occupy residues 174 to 184 and 427 to 437; these read GSSQGNQGATS and SWKSGKNQNQE.

The protein belongs to the AB hydrolase superfamily. Lipase family. In terms of tissue distribution, synthesized in the fat body and ovarian follicle cells and accumulate in the oocyte.

It localises to the secreted. In terms of biological role, vitellogenin is the major yolk protein of eggs where it is used as a food source during embryogenesis. The polypeptide is Vitellogenin-1 (VG1-GAMMA) (Ceratitis capitata (Mediterranean fruit fly)).